Here is a 244-residue protein sequence, read N- to C-terminus: Dirigent protein 18 (244 aa).

The first 25 residues, 1 to 25 (MMKQSPFSLLTSIFLIAALFTATTA), serve as a signal peptide directing secretion.

The protein belongs to the plant dirigent protein family. In terms of assembly, homodimer.

It is found in the secreted. The protein localises to the extracellular space. Its subcellular location is the apoplast. In terms of biological role, dirigent proteins impart stereoselectivity on the phenoxy radical-coupling reaction, yielding optically active lignans from two molecules of coniferyl alcohol in the biosynthesis of lignans, flavonolignans, and alkaloids and thus plays a central role in plant secondary metabolism. The protein is Dirigent protein 18 (DIR18) of Arabidopsis thaliana (Mouse-ear cress).